Reading from the N-terminus, the 128-residue chain is Ribonuclease pancreatic (128 aa).

The disordered stretch occupies residues Lys-1–Tyr-25. Substrate is bound by residues Lys-7 and Arg-10. His-12 acts as the Proton acceptor in catalysis. The segment covering Asp-14–Tyr-25 has biased composition (polar residues). 4 disulfide bridges follow: Cys-26–Cys-84, Cys-40–Cys-95, Cys-58–Cys-110, and Cys-65–Cys-72. The N-linked (GlcNAc...) asparagine glycan is linked to Asn-34. Substrate is bound by residues Lys-41–Thr-45, Lys-66, and Arg-85. The active-site Proton donor is His-119.

It belongs to the pancreatic ribonuclease family. As to quaternary structure, monomer. Interacts with and forms tight 1:1 complexes with RNH1. Dimerization of two such complexes may occur. Interaction with RNH1 inhibits this protein. In terms of tissue distribution, pancreas.

The protein resides in the secreted. The enzyme catalyses an [RNA] containing cytidine + H2O = an [RNA]-3'-cytidine-3'-phosphate + a 5'-hydroxy-ribonucleotide-3'-[RNA].. It carries out the reaction an [RNA] containing uridine + H2O = an [RNA]-3'-uridine-3'-phosphate + a 5'-hydroxy-ribonucleotide-3'-[RNA].. Endonuclease that catalyzes the cleavage of RNA on the 3' side of pyrimidine nucleotides. Acts on single-stranded and double-stranded RNA. The protein is Ribonuclease pancreatic (RNASE1) of Proechimys guairae (Guaira spiny rat).